Reading from the N-terminus, the 200-residue chain is Glycerol-3-phosphate acyltransferase (200 aa).

The next 5 helical transmembrane spans lie at 2 to 22 (FNIP…AVIV), 51 to 71 (KAAA…VLLA), 84 to 104 (AIAA…FFGF), 114 to 134 (LGVL…IWLV), and 158 to 178 (LFFM…ILVL).

It belongs to the PlsY family. As to quaternary structure, probably interacts with PlsX.

It localises to the cell inner membrane. The catalysed reaction is an acyl phosphate + sn-glycerol 3-phosphate = a 1-acyl-sn-glycero-3-phosphate + phosphate. It participates in lipid metabolism; phospholipid metabolism. Catalyzes the transfer of an acyl group from acyl-phosphate (acyl-PO(4)) to glycerol-3-phosphate (G3P) to form lysophosphatidic acid (LPA). This enzyme utilizes acyl-phosphate as fatty acyl donor, but not acyl-CoA or acyl-ACP. The chain is Glycerol-3-phosphate acyltransferase from Neisseria gonorrhoeae (strain ATCC 700825 / FA 1090).